Consider the following 428-residue polypeptide: RUN domain-containing protein 3A (428 aa).

Positions 52 to 182 (DDSSEEFINF…IDFSFCLKGE (131 aa)) constitute an RUN domain. The stretch at 237–314 (ESWRNKCRKM…ELQEQLTSLI (78 aa)) forms a coiled coil. The interval 349 to 375 (HRGSFPSPEPHISLTTGSQRTERKQNG) is disordered.

It belongs to the RUNDC3 family.

The protein is RUN domain-containing protein 3A (rundc3a) of Danio rerio (Zebrafish).